The following is a 176-amino-acid chain: Sigma intracellular receptor 2 (176 aa).

Topologically, residues methionine 1 to cysteine 9 are cytoplasmic. The helical transmembrane segment at valine 10–leucine 30 threads the bilayer. Positions valine 10–leucine 158 constitute an EXPERA domain. The Lumenal segment spans residues glutamine 31–serine 68. A helical transmembrane segment spans residues phenylalanine 69–leucine 89. 2 residues coordinate cholesterol: valine 75 and glutamine 77. Residues lysine 90 to proline 99 are Cytoplasmic-facing. The helical transmembrane segment at alanine 100–phenylalanine 120 threads the bilayer. Positions methionine 108–lysine 176 are required for interaction with Hst1/HTN1. At glutamate 121–arginine 140 the chain is on the lumenal side. Residues leucine 141–methionine 161 traverse the membrane as a helical segment. The Cytoplasmic segment spans residues leucine 162–lysine 176. An ER retention motif motif is present at residues lysine 172–lysine 176.

The protein belongs to the TMEM97/sigma-2 receptor family. As to quaternary structure, homodimer. Interacts with NPC1; the interaction impairs NPC1-mediated cholesterol transport. Interacts with PGRMC1 and LDLR; the interaction increases LDL internalization. Interacts with histatin 1/HTN1; the interaction induces HTN1-stimulating wound healing. Interacts with TSPO. Forms a complex with TSPO and PGRMC1; the interaction occurs in MIA PaCa-2 cells but not in MCF7 cells. Widely expressed in normal tissues. Expressed in pancreatic, renal, breast, colon, ovarian surface epithelial (OSE) cells. Highly expressed in various proliferating cancer cells.

The protein resides in the rough endoplasmic reticulum membrane. It localises to the nucleus membrane. In terms of biological role, sigma-2 receptor which contributes to ameliorate dysfunctional cellular processes and slow degenerative progression by regulating cell functions including cholesterol biosynthesis/trafficking, membrane trafficking, autophagy, lipid membrane-bound protein trafficking, and receptor stabilization at the cell surface. Forms a ternary complex with PGRMC1 receptor and low density lipoprotein receptor/LDLR at the plasma membrane, which increases LDLR-mediated LDL cholesterol internalization. Decreases lysosomal sterol transporter NPC1 availability to the cell, probably through NPC1-binding, hence controlling lipid transport, including cholesterol and LBPA, outside of late endosome/lysosome. Binds regio- and stereoselective ligand 20(S)-hydroxycholesterol (20(S)-OHC) which enhances TMEM97-NPC1 interaction and decreases TMEM97-PGRMC1 and TMEM97-TSPO interactions, thereby linking OHC binding to cholesterol homeostasis. Also able to bind cholesterol. Binds histatin 1 (Hst 1)/HN1 salivary peptide at the ER membrane, which is critical for increasing mitochondria-ER contacts and stimulating Hst1 wound healing properties. May alter the activity of some cytochrome P450 proteins. Although shows homologies with sterol isomerases (EXPERA domain), not able to catalyze sterol isomerization. However, may act as sensors of these molecules. Acts as a quality control factor in the ER, promoting the proteolytic degradation of nonproductive and extramitochondrial precursor proteins in the ER membrane thus removing them from the ER surface. This chain is Sigma intracellular receptor 2, found in Homo sapiens (Human).